The following is a 453-amino-acid chain: G-protein coupled receptor 39 (453 aa).

The Extracellular portion of the chain corresponds to 1 to 34 (MASPSLPGSDCSQIIDHSHVPEFEVATWIKITLI). 2 disulfides stabilise this stretch: C11–C191 and C108–C210. The Zn(2+) site is built by H17 and H19. The helical transmembrane segment at 35–55 (LVYLIIFVMGLLGNSATIRVT) threads the bilayer. Residues 56 to 69 (QVLQKKGYLQKEVT) lie on the Cytoplasmic side of the membrane. Residues 70–89 (DHMVSLACSDILVFLIGMPM) form a helical membrane-spanning segment. Topologically, residues 90 to 109 (EFYSIIWNPLTTSSYTLSCK) are extracellular. A helical membrane pass occupies residues 110–131 (LHTFLFEACSYATLLHVLTLSF). The Cytoplasmic segment spans residues 132–151 (ERYIAICHPFRYKAVSGPCQ). Residues 152 to 172 (VKLLIGFVWVTSALVALPLLF) traverse the membrane as a helical segment. Topologically, residues 173-217 (AMGTEYPLVNVPSHRGLTCNRSSTRHHEQPETSNMSICTNLSSRW) are extracellular. N-linked (GlcNAc...) asparagine glycosylation is found at N192, N206, and N212. Residues 218–242 (TVFQSSIFGAFVVYLVVLLSVAFMC) form a helical membrane-spanning segment. The Cytoplasmic segment spans residues 243–283 (WNMMQVLMKSQKGSLAGGTRPPQLRKSESEESRTARRQTII). Positions 255 to 274 (GSLAGGTRPPQLRKSESEES) are disordered. The chain crosses the membrane as a helical span at residues 284 to 305 (FLRLIVVTLAVCWMPNQIRRIM). Residues 306 to 323 (AAAKPKHDWTRSYFRAYM) lie on the Extracellular side of the membrane. A helical membrane pass occupies residues 324 to 344 (ILLPFSETFFYLSSVINPLLY). Residues 345-453 (TVSSQQFRRV…AENGFQEHEV (109 aa)) are Cytoplasmic-facing. A Phosphoserine modification is found at S396. The disordered stretch occupies residues 415–453 (SEAEPQSKSQSLSLESLEPNSGAKPANSAAENGFQEHEV). The segment covering 418 to 435 (EPQSKSQSLSLESLEPNS) has biased composition (low complexity).

This sequence belongs to the G-protein coupled receptor 1 family. As to quaternary structure, interacts with HTR1A. Interacts with GALR1. As to expression, expressed in many tissues, including the stomach, intestine and hypothalamus.

It localises to the cell membrane. Functionally, zinc-sensing receptor that can sense changes in extracellular Zn(2+), mediate Zn(2+) signal transmission, and participates in the regulation of numerous physiological processes including glucose homeostasis regulation, gastrointestinal mobility, hormone secretion and cell death. Activation by Zn(2+) in keratinocytes increases the intracellular concentration of Ca(2+) and activates the ERK/MAPK and PI3K/AKT signaling pathways leading to epithelial repair. Plays an essential role in normal wound healing by inducing the production of cytokines including the major inflammatory cytokine IL6 via the PKC/MAPK/CEBPB pathway. Regulates adipose tissue metabolism, especially lipolysis, and regulates the function of lipases, such as hormone-sensitive lipase and adipose triglyceride lipase. Plays a role in the inhibition of cell death and protects against oxidative, endoplasmic reticulum and mitochondrial stress by inducing secretion of the cytoprotective pigment epithelium-derived growth factor (PEDF) and probably other protective transcripts in a GNA13/RHOA/SRE-dependent manner. Forms dynamic heteroreceptor complexes with HTR1A and GALR1 depending on cell type or specific physiological states, resulting in signaling diversity: HTR1A-GPR39 shows additive increase in signaling along the serum response element (SRE) and NF-kappa-B pathways while GALR1 acts as an antagonist blocking SRE. The chain is G-protein coupled receptor 39 (GPR39) from Homo sapiens (Human).